A 146-amino-acid polypeptide reads, in one-letter code: Transcriptional regulator MraZ (146 aa).

2 consecutive SpoVT-AbrB domains span residues Glu5–Asp47 and Ser76–Arg119.

Belongs to the MraZ family. In terms of assembly, forms oligomers.

Its subcellular location is the cytoplasm. The protein resides in the nucleoid. This chain is Transcriptional regulator MraZ, found in Dictyoglomus turgidum (strain DSM 6724 / Z-1310).